Reading from the N-terminus, the 336-residue chain is MTHPVKAAVFGTGSWGTAFAVILADAGCEVTLWGRRAEVAEAINTTHTNPDYLPGIALPDSVRATTDAAEALRGADFAFLVVPSQTLRANLADWAPHLEPDTVLVSLMKGVELGTAELMSEVIADVAKVPADRIAVVSGPNLAKEIAERRPAAAVVACADESVAQRLQAACHTSYFRPYTNTDVVGCELGGAVKNVIGLAVGIADGMGLGDNTKGSLITRGLAETTRLGLAMGADPLTFSGLAGLGDLVATCSSPLSRNHTFGTNLGRGMTLQETIAVTKQTAEGVKSCESVLDLARRHGVDMPITETVVSIVHEGKSPVVAVKELMSRSAKPERR.

5 residues coordinate NADPH: S14, W15, R35, R36, and K109. The sn-glycerol 3-phosphate site is built by K109 and G139. A143 is an NADPH binding site. Sn-glycerol 3-phosphate contacts are provided by K194, D247, S257, R258, and N259. K194 functions as the Proton acceptor in the catalytic mechanism. Residue R258 coordinates NADPH. E284 is a binding site for NADPH.

This sequence belongs to the NAD-dependent glycerol-3-phosphate dehydrogenase family.

The protein localises to the cytoplasm. The catalysed reaction is sn-glycerol 3-phosphate + NAD(+) = dihydroxyacetone phosphate + NADH + H(+). It catalyses the reaction sn-glycerol 3-phosphate + NADP(+) = dihydroxyacetone phosphate + NADPH + H(+). The protein operates within membrane lipid metabolism; glycerophospholipid metabolism. Its function is as follows. Catalyzes the reduction of the glycolytic intermediate dihydroxyacetone phosphate (DHAP) to sn-glycerol 3-phosphate (G3P), the key precursor for phospholipid synthesis. This Streptomyces griseus subsp. griseus (strain JCM 4626 / CBS 651.72 / NBRC 13350 / KCC S-0626 / ISP 5235) protein is Glycerol-3-phosphate dehydrogenase [NAD(P)+].